Here is a 491-residue protein sequence, read N- to C-terminus: Protein nucleotidyltransferase YdiU (491 aa).

ATP is bound by residues Gly94, Gly96, Arg97, Lys117, Asp129, Gly130, Arg180, and Arg187. The Proton acceptor role is filled by Asp256. Residues Asn257 and Asp266 each coordinate Mg(2+). Asp266 contributes to the ATP binding site.

This sequence belongs to the SELO family. Requires Mg(2+) as cofactor. Mn(2+) serves as cofactor.

The catalysed reaction is L-seryl-[protein] + ATP = 3-O-(5'-adenylyl)-L-seryl-[protein] + diphosphate. It carries out the reaction L-threonyl-[protein] + ATP = 3-O-(5'-adenylyl)-L-threonyl-[protein] + diphosphate. The enzyme catalyses L-tyrosyl-[protein] + ATP = O-(5'-adenylyl)-L-tyrosyl-[protein] + diphosphate. It catalyses the reaction L-histidyl-[protein] + UTP = N(tele)-(5'-uridylyl)-L-histidyl-[protein] + diphosphate. The catalysed reaction is L-seryl-[protein] + UTP = O-(5'-uridylyl)-L-seryl-[protein] + diphosphate. It carries out the reaction L-tyrosyl-[protein] + UTP = O-(5'-uridylyl)-L-tyrosyl-[protein] + diphosphate. Its function is as follows. Nucleotidyltransferase involved in the post-translational modification of proteins. It can catalyze the addition of adenosine monophosphate (AMP) or uridine monophosphate (UMP) to a protein, resulting in modifications known as AMPylation and UMPylation. The polypeptide is Protein nucleotidyltransferase YdiU (Clostridium botulinum (strain Alaska E43 / Type E3)).